The primary structure comprises 101 residues: Urease subunit beta (101 aa).

It belongs to the urease beta subunit family. As to quaternary structure, heterotrimer of UreA (gamma), UreB (beta) and UreC (alpha) subunits. Three heterotrimers associate to form the active enzyme.

The protein resides in the cytoplasm. It catalyses the reaction urea + 2 H2O + H(+) = hydrogencarbonate + 2 NH4(+). It participates in nitrogen metabolism; urea degradation; CO(2) and NH(3) from urea (urease route): step 1/1. The protein is Urease subunit beta of Actinobacillus pleuropneumoniae serotype 7 (strain AP76).